We begin with the raw amino-acid sequence, 425 residues long: NAD kinase 2, mitochondrial (425 aa).

A mitochondrion-targeting transit peptide spans methionine 1–alanine 45. Residues glutamine 20–aspartate 46 form a disordered region. Lysine 59 is modified (N6-acetyllysine; alternate). Lysine 59 is subject to N6-succinyllysine; alternate. Residue serine 171 is modified to Phosphoserine. The residue at position 285 (lysine 285) is an N6-succinyllysine. Lysine 300 bears the N6-acetyllysine; alternate mark. At lysine 300 the chain carries N6-succinyllysine; alternate. A Phosphoserine modification is found at serine 350. Residue lysine 380 is modified to N6-acetyllysine.

This sequence belongs to the NAD kinase family. Homodimer.

It is found in the mitochondrion. It carries out the reaction NAD(+) + ATP = ADP + NADP(+) + H(+). With respect to regulation, inhibited by NADH, NADPH and NADP(+). Mitochondrial NAD(+) kinase that phosphorylates NAD(+) to yield NADP(+). Can use both ATP or inorganic polyphosphate as the phosphoryl donor. In Rattus norvegicus (Rat), this protein is NAD kinase 2, mitochondrial (Nadk2).